Here is a 293-residue protein sequence, read N- to C-terminus: Diaminopimelate epimerase (293 aa).

Residues N17, Q47, and N67 each coordinate substrate. Residue C76 is the Proton donor of the active site. Residues 77–78 (GN), N164, N197, and 215–216 (ER) contribute to the substrate site. The active-site Proton acceptor is the C224. 225 to 226 (GS) is a binding site for substrate.

The protein belongs to the diaminopimelate epimerase family. Homodimer.

It is found in the cytoplasm. The catalysed reaction is (2S,6S)-2,6-diaminopimelate = meso-2,6-diaminopimelate. It functions in the pathway amino-acid biosynthesis; L-lysine biosynthesis via DAP pathway; DL-2,6-diaminopimelate from LL-2,6-diaminopimelate: step 1/1. Catalyzes the stereoinversion of LL-2,6-diaminopimelate (L,L-DAP) to meso-diaminopimelate (meso-DAP), a precursor of L-lysine and an essential component of the bacterial peptidoglycan. The chain is Diaminopimelate epimerase from Rhodopseudomonas palustris (strain HaA2).